We begin with the raw amino-acid sequence, 807 residues long: Ribosome biogenesis protein ERB1 (807 aa).

The tract at residues 1–112 (MMAKNNKTTE…DTTSLTDRLS (112 aa)) is disordered. Acidic residues-rich tracts occupy residues 21-30 (EESDVEEDED) and 42-56 (EASE…YESA). Serine 23 carries the phosphoserine modification. Basic and acidic residues predominate over residues 57 to 69 (VEEKESSSDKEAQ). A phosphoserine mark is found at serine 72 and serine 76. Residues 86-102 (EEEGDEEEDYDSSEFSD) are compositionally biased toward acidic residues. Lysine 127 is covalently cross-linked (Glycyl lysine isopeptide (Lys-Gly) (interchain with G-Cter in ubiquitin)). Phosphoserine is present on residues serine 146 and serine 149. Residues 265 to 383 (RFVPSKNEAK…LRKVPGYGES (119 aa)) are required for interaction with NOP7. The segment at 383 to 419 (SIRERFERSLDLYLAPRVRKNKLNIDPNSLIPELPSP) is required for interaction with YTM1. Serine 418 is subject to Phosphoserine. WD repeat units follow at residues 435-474 (GHKG…EVYR), 483-523 (NPDD…YDIE), 592-634 (SCKK…TQSP), 637-675 (KSKG…LVKK), 678-717 (PGAR…TPYK), 721-760 (YHEK…DMMK), and 776-807 (INSL…LWTT).

The protein belongs to the WD repeat BOP1/ERB1 family. As to quaternary structure, component of the NOP7 complex, composed of ERB1, NOP7 and YTM1. The complex is held together by ERB1, which interacts with NOP7 via its N-terminal domain and with YTM1 via a high-affinity interaction between the seven-bladed beta-propeller domains of the 2 proteins. The NOP7 complex associates with the 66S pre-ribosome.

Its subcellular location is the nucleus. The protein resides in the nucleolus. It localises to the nucleoplasm. Its function is as follows. Component of the NOP7 complex, which is required for maturation of the 25S and 5.8S ribosomal RNAs and formation of the 60S ribosome. This Saccharomyces cerevisiae (strain YJM789) (Baker's yeast) protein is Ribosome biogenesis protein ERB1.